Consider the following 188-residue polypeptide: Peptidyl-tRNA hydrolase (188 aa).

Phe-14 contributes to the tRNA binding site. Catalysis depends on His-19, which acts as the Proton acceptor. The tRNA site is built by Tyr-64, Asn-66, and Asn-112.

The protein belongs to the PTH family. Monomer.

Its subcellular location is the cytoplasm. The catalysed reaction is an N-acyl-L-alpha-aminoacyl-tRNA + H2O = an N-acyl-L-amino acid + a tRNA + H(+). In terms of biological role, hydrolyzes ribosome-free peptidyl-tRNAs (with 1 or more amino acids incorporated), which drop off the ribosome during protein synthesis, or as a result of ribosome stalling. Functionally, catalyzes the release of premature peptidyl moieties from peptidyl-tRNA molecules trapped in stalled 50S ribosomal subunits, and thus maintains levels of free tRNAs and 50S ribosomes. The polypeptide is Peptidyl-tRNA hydrolase (Aster yellows witches'-broom phytoplasma (strain AYWB)).